A 411-amino-acid chain; its full sequence is ATP-dependent RNA helicase eIF4A (411 aa).

A disordered region spans residues 1–23; the sequence is MSKPEDTSAAAAAPAGEAGNNLN. Residues 9 to 19 are compositionally biased toward low complexity; sequence AAAAAPAGEAG. Positions 38-66 match the Q motif motif; it reads DNFDNMELKEELLRGVYAYGFERPSAIQA. A Helicase ATP-binding domain is found at 69–239; sequence IVPVIKGHDV…KKFMRDPIRI (171 aa). 82 to 89 provides a ligand contact to ATP; sequence AQSGTGKT. A DEAD box motif is present at residues 187–190; the sequence is DEAD. Residues 250–411 form the Helicase C-terminal domain; sequence GIKQFYVAVE…EMPLNVADLI (162 aa).

This sequence belongs to the DEAD box helicase family. eIF4A subfamily. Component of the eIF4F complex, which composition varies with external and internal environmental conditions. It is composed of at least eIF4A, eIF4E and eIF4G.

The protein resides in the cytoplasm. The enzyme catalyses ATP + H2O = ADP + phosphate + H(+). Functionally, ATP-dependent RNA helicase which is a subunit of the eIF4F complex involved in cap recognition and is required for mRNA binding to ribosome. In the current model of translation initiation, eIF4A unwinds RNA secondary structures in the 5'-UTR of mRNAs which is necessary to allow efficient binding of the small ribosomal subunit, and subsequent scanning for the initiator codon. The protein is ATP-dependent RNA helicase eIF4A (TIF1) of Mycosarcoma maydis (Corn smut fungus).